The following is a 236-amino-acid chain: MAATLLDVCAVVPAAGFGRRMQTECPKQYLSIGNKTILEHSVHALLAHPRVTRVVIAISPGDHRFAQLPLANHPQITVVDGGNERADSVLAGLQAVAEAQWVLVHDAARPCLHQDDLARLLAISENSRVGGILASPVRDTMKRGEPGKNAIAHTVERADLWHALTPQFFPRELLHDCLTRALNEGATITDEASALEYCGFHPVLVEGRADNIKVTRPEDLALAEFYLTRTIHQEKA.

It belongs to the IspD/TarI cytidylyltransferase family. IspD subfamily. As to quaternary structure, homodimer.

It carries out the reaction 2-C-methyl-D-erythritol 4-phosphate + CTP + H(+) = 4-CDP-2-C-methyl-D-erythritol + diphosphate. The protein operates within isoprenoid biosynthesis; isopentenyl diphosphate biosynthesis via DXP pathway; isopentenyl diphosphate from 1-deoxy-D-xylulose 5-phosphate: step 2/6. In terms of biological role, catalyzes the formation of 4-diphosphocytidyl-2-C-methyl-D-erythritol from CTP and 2-C-methyl-D-erythritol 4-phosphate (MEP). In Salmonella paratyphi C (strain RKS4594), this protein is 2-C-methyl-D-erythritol 4-phosphate cytidylyltransferase.